A 1220-amino-acid polypeptide reads, in one-letter code: Plasma membrane calcium-transporting ATPase 1 (1220 aa).

Residue Gly2 is modified to N-acetylglycine. Over 2 to 105 (GDMANNSVAY…KTFLQLVWEA (104 aa)) the chain is Cytoplasmic. A phosphoserine mark is found at Ser8 and Ser17. Residues 106–126 (LQDVTLIILEIAAIVSLGLSF) traverse the membrane as a helical segment. At 127–154 (YQPPEGDNALCGEVSVGEEEGEGETGWI) the chain is on the extracellular side. A helical membrane pass occupies residues 155-175 (EGAAILLSVVCVVLVTAFNDW). The Cytoplasmic portion of the chain corresponds to 176–366 (SKEKQFRGLQ…KEKSVLQGKL (191 aa)). The interval 297 to 356 (EEEKKDEKKKEKKNKKQDGAIENRNKAKAQDGAAMEMQPLKSEEGGDGDEKDKKKANLPK) is disordered. Basic and acidic residues-rich tracts occupy residues 312–325 (KQDGAIENRNKAKA) and 337–356 (KSEEGGDGDEKDKKKANLPK). A Phosphoserine modification is found at Ser338. A helical membrane pass occupies residues 367 to 386 (TKLAVQIGKAGLLMSAITVI). Topologically, residues 387 to 418 (ILVLYFVIDTFWVQKRPWLAECTPIYIQYFVK) are extracellular. Residues 419–439 (FFIIGVTVLVVAVPEGLPLAV) form a helical membrane-spanning segment. Residues 440–855 (TISLAYSVKK…RNVYDSISKF (416 aa)) lie on the Cytoplasmic side of the membrane. Asp475 functions as the 4-aspartylphosphate intermediate in the catalytic mechanism. Mg(2+)-binding residues include Asp475, Thr477, and Asp797. A helical transmembrane segment spans residues 856 to 876 (LQFQLTVNVVAVIVAFTGACI). Topologically, residues 877–882 (TQDSPL) are extracellular. Residues 883–903 (KAVQMLWVNLIMDTLASLALA) traverse the membrane as a helical segment. Residues 904 to 927 (TEPPTESLLLRKPYGRNKPLISRT) lie on the Cytoplasmic side of the membrane. The chain crosses the membrane as a helical span at residues 928 to 948 (MMKNILGHAFYQLVVVFTLLF). Over 949 to 971 (AGEKFFDIDSGRNAPLHAPPSEH) the chain is Extracellular. Residues 972 to 991 (YTIVFNTFVLMQLFNEINAR) traverse the membrane as a helical segment. The Cytoplasmic segment spans residues 992-1005 (KIHGERNVFEGIFN). A helical membrane pass occupies residues 1006 to 1027 (NAIFCTIVLGTFVVQIIIVQFG). Residues 1028–1039 (GKPFSCSELSIE) are Extracellular-facing. The helical transmembrane segment at 1040–1060 (QWLWSIFLGMGTLLWGQLIST) threads the bilayer. Residues 1061–1220 (IPTSRLKFLK…SPLHSLETSL (160 aa)) lie on the Cytoplasmic side of the membrane. The segment at 1100–1117 (LRRGQILWFRGLNRIQTQ) is calmodulin-binding subdomain A. Thr1116 bears the Phosphothreonine; by PKC mark. The required for basolateral membrane targeting stretch occupies residues 1118–1220 (IRVVNAFRSS…SPLHSLETSL (103 aa)). A phosphoserine mark is found at Ser1140 and Ser1155. The interval 1162–1220 (IDDTDAEDDAPTKRNSSPPPSPNKNNNAVDSGIHLTIEMNKSATSSSPGSPLHSLETSL) is disordered. At Thr1165 the chain carries Phosphothreonine. Ser1177 carries the phosphoserine; by PKA modification. Phosphoserine is present on residues Ser1178 and Ser1182. Over residues 1200-1220 (MNKSATSSSPGSPLHSLETSL) the composition is skewed to polar residues.

This sequence belongs to the cation transport ATPase (P-type) (TC 3.A.3) family. Type IIB subfamily. In terms of assembly, monomer. Dimer. Oligomer. Calmodulin binding. Interacts with PDZD11. Interacts with SLC35G1 and STIM1. Interacts with YWHAE; interacts with the monomeric and dimeric forms of the YWHAE but prefer the monomer form; this interaction inhibits calcium-transporting ATPase activity. Interacts with NPTN; this interaction stabilizes ATP2B1 and increases ATPase activity; this interaction controls T cell calcium homeostasis following T cell activation. Interacts with EPB41; regulates small intestinal calcium absorption through regulation of membrane expression of ATP2B1. Isoform B is ubiquitously expressed. Isoforms A and E have only been found in brain cortex. Isoform C is found in brain cortex, skeletal muscle and heart muscle. Isoform D has only been found in fetal skeletal muscle. Isoform K has been found in small intestine and liver. Isoform B is expressed in hair cells of inner ear.

The protein localises to the cell membrane. It is found in the basolateral cell membrane. The protein resides in the synapse. It localises to the presynaptic cell membrane. Its subcellular location is the cytoplasmic vesicle. The protein localises to the secretory vesicle. It is found in the synaptic vesicle membrane. It carries out the reaction Ca(2+)(in) + ATP + H2O = Ca(2+)(out) + ADP + phosphate + H(+). In terms of biological role, catalyzes the hydrolysis of ATP coupled with the transport of calcium from the cytoplasm to the extracellular space thereby maintaining intracellular calcium homeostasis. Plays a role in blood pressure regulation through regulation of intracellular calcium concentration and nitric oxide production leading to regulation of vascular smooth muscle cells vasoconstriction. Positively regulates bone mineralization through absorption of calcium from the intestine. Plays dual roles in osteoclast differentiation and survival by regulating RANKL-induced calcium oscillations in preosteoclasts and mediating calcium extrusion in mature osteoclasts. Regulates insulin sensitivity through calcium/calmodulin signaling pathway by regulating AKT1 activation and NOS3 activation in endothelial cells. May play a role in synaptic transmission by modulating calcium and proton dynamics at the synaptic vesicles. The polypeptide is Plasma membrane calcium-transporting ATPase 1 (Rattus norvegicus (Rat)).